The chain runs to 783 residues: ATP-dependent DNA helicase Hel308 (783 aa).

ATP-binding positions include glutamine 29 and 47–54; that span reads VPTASGKT. Residues 34 to 209 enclose the Helicase ATP-binding domain; it reads ERGVTEGANL…WLDAELVDSD (176 aa). The DEAH box motif lies at 154 to 157; the sequence is DEVH. Residues 242 to 443 form the Helicase C-terminal domain; sequence QTAAVVADTL…EPALRTHVLA (202 aa). A disordered region spans residues 744–783; that stretch reads ETVGHPDPGMDGVAADTDAAPESGGEAGGDEGQASLGDFS.

Belongs to the helicase family. Hel308 subfamily. In terms of assembly, monomer.

The catalysed reaction is Couples ATP hydrolysis with the unwinding of duplex DNA by translocating in the 3'-5' direction.. It catalyses the reaction ATP + H2O = ADP + phosphate + H(+). DNA-dependent ATPase and 3'-5' DNA helicase that may be involved in repair of stalled replication forks. This Halobacterium salinarum (strain ATCC 700922 / JCM 11081 / NRC-1) (Halobacterium halobium) protein is ATP-dependent DNA helicase Hel308.